We begin with the raw amino-acid sequence, 147 residues long: MGLRPQLAAILLCLLACTGNWTLGCHHGALKEIIHILNQVTEKGTPCTEMVVPDALSARKNSTEKDLICRASQGFRKFYFQHEVTLCLKNNSRVLKDLKKLYRGISSLFPQKSCNVNESTYTTLKDFLESLRRIMQKKYWQCGSSTF.

An N-terminal signal peptide occupies residues 1 to 19; the sequence is MGLRPQLAAILLCLLACTG. N-linked (GlcNAc...) asparagine glycans are attached at residues asparagine 20, asparagine 61, asparagine 90, and asparagine 117. Disulfide bonds link cysteine 47–cysteine 87 and cysteine 69–cysteine 114.

This sequence belongs to the IL-4/IL-13 family.

It is found in the secreted. Participates in at least several B-cell activation processes as well as of other cell types. It is a costimulator of DNA-synthesis. It induces the expression of class II MHC molecules on resting B-cells. It enhances both secretion and cell surface expression of IgE and IgG1. It also regulates the expression of the low affinity Fc receptor for IgE (CD23) on both lymphocytes and monocytes. Positively regulates IL31RA expression in macrophages. Stimulates autophagy in dendritic cells by interfering with mTORC1 signaling and through the induction of RUFY4. In Mesocricetus auratus (Golden hamster), this protein is Interleukin-4 (IL4).